The sequence spans 369 residues: MKSGRFIGVMSGTSLDGVDVVLATIDEHRVAQLASLSWPIPVSLKQAVLDICQGQQLTLSQFGQLDTQLGRLFADAVNALLKEQNLQARDIVAIGCHGQTVWHEPTGVAPHTLQIGDNNQIVARTGITVVGDFRRRDIALGGQGAPLVPAFHHALLAHPTERRMVLNIGGIANLSLLIPGQLVGGYDTGPGNMLMDAWIWRQAGKPYDKDAEWARAGKVILPLLQNMLSDPYFSQPAPKSTGREYFNYGWLERHLRHFPGVDPRDVQATLAELTAVTISEQVLLSGGCERLMVCGGGSRNLLLMARLAALLPGTEVTTTDAVGISGDDMEALAFAWLAWRTLAGLPGNLPSVTGASQETVLGAIFPANP.

12-19 (GTSLDGVD) lines the ATP pocket.

Belongs to the anhydro-N-acetylmuramic acid kinase family.

It catalyses the reaction 1,6-anhydro-N-acetyl-beta-muramate + ATP + H2O = N-acetyl-D-muramate 6-phosphate + ADP + H(+). Its pathway is amino-sugar metabolism; 1,6-anhydro-N-acetylmuramate degradation. It participates in cell wall biogenesis; peptidoglycan recycling. Functionally, catalyzes the specific phosphorylation of 1,6-anhydro-N-acetylmuramic acid (anhMurNAc) with the simultaneous cleavage of the 1,6-anhydro ring, generating MurNAc-6-P. Is required for the utilization of anhMurNAc either imported from the medium or derived from its own cell wall murein, and thus plays a role in cell wall recycling. The chain is Anhydro-N-acetylmuramic acid kinase from Shigella boydii serotype 4 (strain Sb227).